A 1461-amino-acid polypeptide reads, in one-letter code: Gag-Pol polyprotein (1461 aa).

The N-myristoyl glycine; by host moiety is linked to residue G2. The interval 7–31 (VLRGKKADELEKIRLRPGGKKKYKL) is interaction with Gp41. The Nuclear export signal motif lies at 16–22 (LEKIRLR). Residues 26 to 32 (KKKYKLK) carry the Nuclear localization signal motif. The segment at 189 to 226 (NCVGDHQAAMQIIREIINEEAADWDVAHPIPGPLPAGQ) is interaction with human PPIA/CYPA and NUP153. The interval 277–363 (YNPTNILDIN…GGPGQKARLM (87 aa)) is dimerization/Multimerization of capsid protein p24. CCHC-type zinc fingers lie at residues 387–404 (FKCW…QWSA) and 408–425 (QGCW…NCPD). Residues 436–467 (LGKEGPQLPRGPSPAGANTNSTPIGSSSGPTG) are disordered. A compositionally biased stretch (low complexity) spans 453 to 467 (NTNSTPIGSSSGPTG). Residues 511–515 (PQFSL) are dimerization of protease. In terms of domain architecture, Peptidase A2 spans 530–599 (VEVLLDTRAN…TPINIFGRNV (70 aa)). Residue D535 is the For protease activity; shared with dimeric partner of the active site. Dimerization of protease stretches follow at residues 559 to 565 (GIGGFIN) and 598 to 610 (NVLT…LNLP). Residues 653 to 843 (EGQLEEAPPT…PPYRWMGYEL (191 aa)) enclose the Reverse transcriptase domain. Mg(2+) contacts are provided by D719, D794, and D795. Residues 836–844 (YRWMGYELW) are RT 'primer grip'. The short motif at 1006 to 1022 (WEQWWDNYWQVTWIPDW) is the Tryptophan repeat motif element. In terms of domain architecture, RNase H type-1 spans 1042–1165 (VPGAETFYTD…VDHLVSQGIR (124 aa)). D1051, E1086, D1106, and D1157 together coordinate Mg(2+). An Integrase-type; degenerate zinc finger spans residues 1171-1212 (EKIEPAQEEHEKYHSNIKELSHKFGIPKLVARQIVNTCAHVQ). An Integrase catalytic domain is found at 1221–1372 (QVNAELGTWQ…TPAERIINMI (152 aa)). Mg(2+) is bound by residues D1232, D1284, and E1320. Residues 1391–1438 (FRVYFREGRDQLWKGPGELLWKGDGAVIVKVGTEIKVVPRRKAKIIKD) constitute a DNA-binding region (integrase-type).

In terms of assembly, homotrimer; further assembles as hexamers of trimers. Interacts with gp41 (via C-terminus). Interacts with host CALM1; this interaction induces a conformational change in the Matrix protein, triggering exposure of the myristate group. Interacts with host AP3D1; this interaction allows the polyprotein trafficking to multivesicular bodies during virus assembly. Part of the pre-integration complex (PIC) which is composed of viral genome, matrix protein, Vpr and integrase. As to quaternary structure, homodimer; the homodimer further multimerizes as homohexamers or homopentamers. Interacts with human PPIA/CYPA. Interacts with human NUP153. Interacts with host PDZD8; this interaction stabilizes the capsid. Interacts with monkey TRIM5; this interaction destabilizes the capsid. Homodimer, whose active site consists of two apposed aspartic acid residues. In terms of assembly, heterodimer of p66 RT and p51 RT (RT p66/p51). Heterodimerization of RT is essential for DNA polymerase activity. The overall folding of the subdomains is similar in p66 RT and p51 RT but the spatial arrangements of the subdomains are dramatically different. As to quaternary structure, homotetramer; may further associate as a homohexadecamer. Part of the pre-integration complex (PIC) which is composed of viral genome, matrix protein, Vpr and integrase. Interacts with human SMARCB1/INI1 and human PSIP1/LEDGF isoform 1. Interacts with human KPNA3; this interaction might play a role in nuclear import of the pre-integration complex. Interacts with human NUP153; this interaction might play a role in nuclear import of the pre-integration complex. The cofactor is Mg(2+). In terms of processing, specific enzymatic cleavages by the viral protease yield mature proteins. The protease is released by autocatalytic cleavage. The polyprotein is cleaved during and after budding, this process is termed maturation. Proteolytic cleavage of p66 RT removes the RNase H domain to yield the p51 RT subunit. Nucleocapsid protein p7 might be further cleaved after virus entry.

Its subcellular location is the host cell membrane. The protein localises to the host endosome. The protein resides in the host multivesicular body. It is found in the virion membrane. It localises to the host nucleus. Its subcellular location is the host cytoplasm. The protein localises to the virion. The catalysed reaction is Endopeptidase for which the P1 residue is preferably hydrophobic.. It carries out the reaction Endohydrolysis of RNA in RNA/DNA hybrids. Three different cleavage modes: 1. sequence-specific internal cleavage of RNA. Human immunodeficiency virus type 1 and Moloney murine leukemia virus enzymes prefer to cleave the RNA strand one nucleotide away from the RNA-DNA junction. 2. RNA 5'-end directed cleavage 13-19 nucleotides from the RNA end. 3. DNA 3'-end directed cleavage 15-20 nucleotides away from the primer terminus.. The enzyme catalyses 3'-end directed exonucleolytic cleavage of viral RNA-DNA hybrid.. It catalyses the reaction DNA(n) + a 2'-deoxyribonucleoside 5'-triphosphate = DNA(n+1) + diphosphate. With respect to regulation, protease: The viral protease is inhibited by many synthetic protease inhibitors (PIs), such as amprenavir, atazanavir, indinavir, loprinavir, nelfinavir, ritonavir and saquinavir. Use of protease inhibitors in tritherapy regimens permit more ambitious therapeutic strategies. Reverse transcriptase/ribonuclease H: RT can be inhibited either by nucleoside RT inhibitors (NRTIs) or by non nucleoside RT inhibitors (NNRTIs). NRTIs act as chain terminators, whereas NNRTIs inhibit DNA polymerization by binding a small hydrophobic pocket near the RT active site and inducing an allosteric change in this region. Classical NRTIs are abacavir, adefovir (PMEA), didanosine (ddI), lamivudine (3TC), stavudine (d4T), tenofovir (PMPA), zalcitabine (ddC), and zidovudine (AZT). Classical NNRTIs are atevirdine (BHAP U-87201E), delavirdine, efavirenz (DMP-266), emivirine (I-EBU), and nevirapine (BI-RG-587). The tritherapies used as a basic effective treatment of AIDS associate two NRTIs and one NNRTI. Its function is as follows. Mediates, with Gag polyprotein, the essential events in virion assembly, including binding the plasma membrane, making the protein-protein interactions necessary to create spherical particles, recruiting the viral Env proteins, and packaging the genomic RNA via direct interactions with the RNA packaging sequence (Psi). Gag-Pol polyprotein may regulate its own translation, by the binding genomic RNA in the 5'-UTR. At low concentration, the polyprotein would promote translation, whereas at high concentration, the polyprotein would encapsidate genomic RNA and then shut off translation. In terms of biological role, targets the polyprotein to the plasma membrane via a multipartite membrane-binding signal, that includes its myristoylated N-terminus. Matrix protein is part of the pre-integration complex. Implicated in the release from host cell mediated by Vpu. Binds to RNA. Functionally, forms the conical core that encapsulates the genomic RNA-nucleocapsid complex in the virion. Most core are conical, with only 7% tubular. The core is constituted by capsid protein hexamer subunits. The core is disassembled soon after virion entry. Host restriction factors such as TRIM5-alpha or TRIMCyp bind retroviral capsids and cause premature capsid disassembly, leading to blocks in reverse transcription. Capsid restriction by TRIM5 is one of the factors which restricts HIV-1 to the human species. Host PIN1 apparently facilitates the virion uncoating. On the other hand, interactions with PDZD8 or CYPA stabilize the capsid. Encapsulates and protects viral dimeric unspliced genomic RNA (gRNA). Binds these RNAs through its zinc fingers. Acts as a nucleic acid chaperone which is involved in rearangement of nucleic acid secondary structure during gRNA retrotranscription. Also facilitates template switch leading to recombination. As part of the polyprotein, participates in gRNA dimerization, packaging, tRNA incorporation and virion assembly. Its function is as follows. Aspartyl protease that mediates proteolytic cleavages of Gag and Gag-Pol polyproteins during or shortly after the release of the virion from the plasma membrane. Cleavages take place as an ordered, step-wise cascade to yield mature proteins. This process is called maturation. Displays maximal activity during the budding process just prior to particle release from the cell. Also cleaves Nef and Vif, probably concomitantly with viral structural proteins on maturation of virus particles. Hydrolyzes host EIF4GI and PABP1 in order to shut off the capped cellular mRNA translation. The resulting inhibition of cellular protein synthesis serves to ensure maximal viral gene expression and to evade host immune response. In terms of biological role, multifunctional enzyme that converts the viral RNA genome into dsDNA in the cytoplasm, shortly after virus entry into the cell. This enzyme displays a DNA polymerase activity that can copy either DNA or RNA templates, and a ribonuclease H (RNase H) activity that cleaves the RNA strand of RNA-DNA heteroduplexes in a partially processive 3' to 5' endonucleasic mode. Conversion of viral genomic RNA into dsDNA requires many steps. A tRNA(3)-Lys binds to the primer-binding site (PBS) situated at the 5'-end of the viral RNA. RT uses the 3' end of the tRNA primer to perform a short round of RNA-dependent minus-strand DNA synthesis. The reading proceeds through the U5 region and ends after the repeated (R) region which is present at both ends of viral RNA. The portion of the RNA-DNA heteroduplex is digested by the RNase H, resulting in a ssDNA product attached to the tRNA primer. This ssDNA/tRNA hybridizes with the identical R region situated at the 3' end of viral RNA. This template exchange, known as minus-strand DNA strong stop transfer, can be either intra- or intermolecular. RT uses the 3' end of this newly synthesized short ssDNA to perform the RNA-dependent minus-strand DNA synthesis of the whole template. RNase H digests the RNA template except for two polypurine tracts (PPTs) situated at the 5'-end and near the center of the genome. It is not clear if both polymerase and RNase H activities are simultaneous. RNase H probably can proceed both in a polymerase-dependent (RNA cut into small fragments by the same RT performing DNA synthesis) and a polymerase-independent mode (cleavage of remaining RNA fragments by free RTs). Secondly, RT performs DNA-directed plus-strand DNA synthesis using the PPTs that have not been removed by RNase H as primers. PPTs and tRNA primers are then removed by RNase H. The 3' and 5' ssDNA PBS regions hybridize to form a circular dsDNA intermediate. Strand displacement synthesis by RT to the PBS and PPT ends produces a blunt ended, linear dsDNA copy of the viral genome that includes long terminal repeats (LTRs) at both ends. Functionally, catalyzes viral DNA integration into the host chromosome, by performing a series of DNA cutting and joining reactions. This enzyme activity takes place after virion entry into a cell and reverse transcription of the RNA genome in dsDNA. The first step in the integration process is 3' processing. This step requires a complex comprising the viral genome, matrix protein, Vpr and integrase. This complex is called the pre-integration complex (PIC). The integrase protein removes 2 nucleotides from each 3' end of the viral DNA, leaving recessed CA OH's at the 3' ends. In the second step, the PIC enters cell nucleus. This process is mediated through integrase and Vpr proteins, and allows the virus to infect a non dividing cell. This ability to enter the nucleus is specific of lentiviruses, other retroviruses cannot and rely on cell division to access cell chromosomes. In the third step, termed strand transfer, the integrase protein joins the previously processed 3' ends to the 5' ends of strands of target cellular DNA at the site of integration. The 5'-ends are produced by integrase-catalyzed staggered cuts, 5 bp apart. A Y-shaped, gapped, recombination intermediate results, with the 5'-ends of the viral DNA strands and the 3' ends of target DNA strands remaining unjoined, flanking a gap of 5 bp. The last step is viral DNA integration into host chromosome. This involves host DNA repair synthesis in which the 5 bp gaps between the unjoined strands are filled in and then ligated. Since this process occurs at both cuts flanking the HIV genome, a 5 bp duplication of host DNA is produced at the ends of HIV-1 integration. Alternatively, Integrase may catalyze the excision of viral DNA just after strand transfer, this is termed disintegration. The protein is Gag-Pol polyprotein (gag-pol) of Homo sapiens (Human).